The primary structure comprises 303 residues: MSELPDRRLLLVHAHPDDETINNGATMARYVAEGAHVTLVTCTLGEEGEVLVPELAHLAADQSDQLGRHRIGELAAAMDELGVTDHRFLGGPGRYRDTGMIYDEQGNAAVPPDTRPDSFWQADLVTAANDLVTVIREVRPQVLVTYDEFGNYGHPDHVQAHRVATYAAALAAARSYREDLGPAWDIPKIYWTAISETAMRSSLRRLRESGDHTTFEGMDPDGPLGPMITPDRFIDCVIPADGYLDRKMNAMKAHATQITVDGPFFALSNNDGNEIFGDEFYRLVKGTAAPGSDGLEHDLFAGL.

The Zn(2+) site is built by histidine 15, aspartate 18, and histidine 157.

This sequence belongs to the MshB deacetylase family. Requires Zn(2+) as cofactor.

It carries out the reaction 1D-myo-inositol 2-acetamido-2-deoxy-alpha-D-glucopyranoside + H2O = 1D-myo-inositol 2-amino-2-deoxy-alpha-D-glucopyranoside + acetate. In terms of biological role, catalyzes the deacetylation of 1D-myo-inositol 2-acetamido-2-deoxy-alpha-D-glucopyranoside (GlcNAc-Ins) in the mycothiol biosynthesis pathway. The sequence is that of 1D-myo-inositol 2-acetamido-2-deoxy-alpha-D-glucopyranoside deacetylase from Kribbella flavida (strain DSM 17836 / JCM 10339 / NBRC 14399).